A 266-amino-acid polypeptide reads, in one-letter code: Thymidylate synthase (266 aa).

Residue Arg24 coordinates dUMP. His54 provides a ligand contact to (6R)-5,10-methylene-5,6,7,8-tetrahydrofolate. Residue 129 to 130 (RR) participates in dUMP binding. The Nucleophile role is filled by Cys149. DUMP-binding positions include 169–172 (RSAD), Asn180, and 210–212 (HIY). Asp172 provides a ligand contact to (6R)-5,10-methylene-5,6,7,8-tetrahydrofolate. (6R)-5,10-methylene-5,6,7,8-tetrahydrofolate is bound at residue Ala265.

Belongs to the thymidylate synthase family. Bacterial-type ThyA subfamily. Homodimer.

It is found in the cytoplasm. The enzyme catalyses dUMP + (6R)-5,10-methylene-5,6,7,8-tetrahydrofolate = 7,8-dihydrofolate + dTMP. It functions in the pathway pyrimidine metabolism; dTTP biosynthesis. Its function is as follows. Catalyzes the reductive methylation of 2'-deoxyuridine-5'-monophosphate (dUMP) to 2'-deoxythymidine-5'-monophosphate (dTMP) while utilizing 5,10-methylenetetrahydrofolate (mTHF) as the methyl donor and reductant in the reaction, yielding dihydrofolate (DHF) as a by-product. This enzymatic reaction provides an intracellular de novo source of dTMP, an essential precursor for DNA biosynthesis. This is Thymidylate synthase from Nocardia farcinica (strain IFM 10152).